Here is an 88-residue protein sequence, read N- to C-terminus: Small ribosomal subunit protein bS20 (88 aa).

Disordered stretches follow at residues 1-25 and 61-88; these read MANS…KARR and GVTK…ALGA.

Belongs to the bacterial ribosomal protein bS20 family.

Its function is as follows. Binds directly to 16S ribosomal RNA. In Jannaschia sp. (strain CCS1), this protein is Small ribosomal subunit protein bS20.